Consider the following 1367-residue polypeptide: Probable serine/threonine-protein kinase pkgA (1367 aa).

Disordered regions lie at residues 140–164 (IDENNNNNNNNNNNNNNNNNKNKTI), 264–429 (KNGK…LLSR), 456–556 (PTPL…SRKP), and 771–792 (PREEELSQTPLGGRLRSDSDPV). The segment covering 143 to 162 (NNNNNNNNNNNNNNNNNKNK) has biased composition (low complexity). Residues 271–282 (IKRPSPPLPPPQ) show a composition bias toward pro residues. Residues 287 to 326 (EQQKEQKEQQKEQQKEQQKEQQKEQEQKQQEPQKYVKFEI) show a composition bias toward basic and acidic residues. Low complexity predominate over residues 340–381 (ISSSNISNEISKQQQQQQQQQQQQQQQQQQQQQQQQQQQQQQ). Over residues 399–421 (ANNNILTTPLSSQPTQSLETPST) the composition is skewed to polar residues. A compositionally biased stretch (acidic residues) spans 506–517 (GEDEEEDEDDDN). Basic residues predominate over residues 531-544 (LKNKRPFKKTHVHH). Residues 810–1236 (FEFIKPITKG…AEEIKSHPFF (427 aa)) enclose the Protein kinase domain. ATP-binding positions include 816–824 (ITKGGYGKV) and K839. D933 functions as the Proton acceptor in the catalytic mechanism. 3 disordered regions span residues 971 to 1034 (FSPT…PSNT), 1084 to 1134 (FIPP…HNIH), and 1288 to 1312 (QNQNKESSTILTTSPPSTSSTTATA). Positions 979–1015 (NNQSSSSSSVSNIGGSNTIGSNISSTNNNNNNNNTTG) are enriched in low complexity. Residues 1025-1034 (NTETPIPSNT) show a composition bias toward polar residues. Low complexity-rich tracts occupy residues 1092 to 1125 (QQPISNIPTTTTTTTTTTTGQQSQQQSQQQQQTT) and 1294 to 1312 (SSTILTTSPPSTSSTTATA). In terms of domain architecture, AGC-kinase C-terminal spans 1237–1347 (KSINWKTILT…VNFQSLLELN (111 aa)).

Belongs to the protein kinase superfamily. AGC Ser/Thr protein kinase family.

The catalysed reaction is L-seryl-[protein] + ATP = O-phospho-L-seryl-[protein] + ADP + H(+). The enzyme catalyses L-threonyl-[protein] + ATP = O-phospho-L-threonyl-[protein] + ADP + H(+). The sequence is that of Probable serine/threonine-protein kinase pkgA (pkgA) from Dictyostelium discoideum (Social amoeba).